Here is a 272-residue protein sequence, read N- to C-terminus: Shikimate dehydrogenase (NADP(+)) (272 aa).

Residues 14–16 (SKS) and Thr-61 contribute to the shikimate site. Lys-65 (proton acceptor) is an active-site residue. Residues Asn-86 and Asp-102 each contribute to the shikimate site. Residues 126–130 (GAGGA), 150–155 (NRTASK), and Met-214 each bind NADP(+). Tyr-216 is a binding site for shikimate. Position 239 (Gly-239) interacts with NADP(+).

The protein belongs to the shikimate dehydrogenase family. Homodimer.

It catalyses the reaction shikimate + NADP(+) = 3-dehydroshikimate + NADPH + H(+). It functions in the pathway metabolic intermediate biosynthesis; chorismate biosynthesis; chorismate from D-erythrose 4-phosphate and phosphoenolpyruvate: step 4/7. Functionally, involved in the biosynthesis of the chorismate, which leads to the biosynthesis of aromatic amino acids. Catalyzes the reversible NADPH linked reduction of 3-dehydroshikimate (DHSA) to yield shikimate (SA). This Pseudoalteromonas atlantica (strain T6c / ATCC BAA-1087) protein is Shikimate dehydrogenase (NADP(+)).